Consider the following 360-residue polypeptide: Phospho-N-acetylmuramoyl-pentapeptide-transferase (360 aa).

The next 10 helical transmembrane spans lie at 25 to 45, 73 to 93, 97 to 117, 128 to 148, 168 to 188, 199 to 219, 236 to 256, 262 to 282, 288 to 308, and 338 to 358; these read RAILSVLTALVLSLWLGPTLI, TMGGVLILAAVLGSSLLWADL, YVWVVLLVTTGFGIVGFVDDY, LIAKWKYFWQSVIASVAAVYL, VMPQLGMLYMLMAYFVIVGTS, GLAIMPTIMVAAALGIFAYVS, TAELLVVCTAIVGAGLGFLWF, LVFMGDVGSLALGAALGIIAI, LVLFIMGGVFVMETLSVMLQV, and VIVRFWILSLIFVLIGLATLK.

It belongs to the glycosyltransferase 4 family. MraY subfamily. It depends on Mg(2+) as a cofactor.

Its subcellular location is the cell inner membrane. The catalysed reaction is UDP-N-acetyl-alpha-D-muramoyl-L-alanyl-gamma-D-glutamyl-meso-2,6-diaminopimeloyl-D-alanyl-D-alanine + di-trans,octa-cis-undecaprenyl phosphate = di-trans,octa-cis-undecaprenyl diphospho-N-acetyl-alpha-D-muramoyl-L-alanyl-D-glutamyl-meso-2,6-diaminopimeloyl-D-alanyl-D-alanine + UMP. The protein operates within cell wall biogenesis; peptidoglycan biosynthesis. Functionally, catalyzes the initial step of the lipid cycle reactions in the biosynthesis of the cell wall peptidoglycan: transfers peptidoglycan precursor phospho-MurNAc-pentapeptide from UDP-MurNAc-pentapeptide onto the lipid carrier undecaprenyl phosphate, yielding undecaprenyl-pyrophosphoryl-MurNAc-pentapeptide, known as lipid I. The sequence is that of Phospho-N-acetylmuramoyl-pentapeptide-transferase from Idiomarina loihiensis (strain ATCC BAA-735 / DSM 15497 / L2-TR).